We begin with the raw amino-acid sequence, 267 residues long: Putative B3 domain-containing protein LOC_Os07g12820 (267 aa).

The segment at residues 4 to 99 is a DNA-binding region (TF-B3); sequence PTFSMVKIKT…RLNVIIFNKE (96 aa).

It is found in the nucleus. The chain is Putative B3 domain-containing protein LOC_Os07g12820 from Oryza sativa subsp. japonica (Rice).